Consider the following 279-residue polypeptide: Nitrogenase vanadium-iron protein alpha chain (279 aa).

[8Fe-7S] cluster contacts are provided by Cys-5, Cys-31, and Cys-94. Residue Cys-213 coordinates [7Fe-V-9S-C-homocitryl] cluster.

This sequence belongs to the NifD/NifK/NifE/NifN family. Hexamer of two alpha, two beta, and two delta chains. [8Fe-7S] cluster is required as a cofactor. The cofactor is [7Fe-V-9S-C-homocitryl] cluster.

It carries out the reaction N2 + 8 reduced [2Fe-2S]-[ferredoxin] + 16 ATP + 16 H2O = H2 + 8 oxidized [2Fe-2S]-[ferredoxin] + 2 NH4(+) + 16 ADP + 16 phosphate + 6 H(+). Functionally, this vanadium-iron protein is part of the nitrogenase complex that catalyzes the key enzymatic reactions in nitrogen fixation. The chain is Nitrogenase vanadium-iron protein alpha chain (vnfD) from Azotobacter salinestris.